Here is a 500-residue protein sequence, read N- to C-terminus: Probable cytosol aminopeptidase (500 aa).

Positions 264 and 269 each coordinate Mn(2+). Lysine 276 is an active-site residue. Residues aspartate 287, aspartate 346, and glutamate 348 each coordinate Mn(2+). Arginine 350 is an active-site residue.

This sequence belongs to the peptidase M17 family. It depends on Mn(2+) as a cofactor.

The protein resides in the cytoplasm. It catalyses the reaction Release of an N-terminal amino acid, Xaa-|-Yaa-, in which Xaa is preferably Leu, but may be other amino acids including Pro although not Arg or Lys, and Yaa may be Pro. Amino acid amides and methyl esters are also readily hydrolyzed, but rates on arylamides are exceedingly low.. The catalysed reaction is Release of an N-terminal amino acid, preferentially leucine, but not glutamic or aspartic acids.. Its function is as follows. Presumably involved in the processing and regular turnover of intracellular proteins. Catalyzes the removal of unsubstituted N-terminal amino acids from various peptides. In Rhodopseudomonas palustris (strain ATCC BAA-98 / CGA009), this protein is Probable cytosol aminopeptidase.